Consider the following 85-residue polypeptide: RNA-binding protein Hfq (85 aa).

One can recognise a Sm domain in the interval 9 to 68 (DPFLNELRKEKVPVSVFLVNGIKLHGIIDSFDQYVVMLKNSITQMVYKHAISTVVPSRMV).

This sequence belongs to the Hfq family. Homohexamer.

RNA chaperone that binds small regulatory RNA (sRNAs) and mRNAs to facilitate mRNA translational regulation in response to envelope stress, environmental stress and changes in metabolite concentrations. Also binds with high specificity to tRNAs. The polypeptide is RNA-binding protein Hfq (Legionella pneumophila (strain Paris)).